Consider the following 122-residue polypeptide: Putative TLX1 neighbor protein (122 aa).

The interval Ser21–Gln122 is disordered. Over residues Leu113 to Gln122 the composition is skewed to gly residues.

This is Putative TLX1 neighbor protein (TLX1NB) from Homo sapiens (Human).